Here is a 544-residue protein sequence, read N- to C-terminus: Aspartokinase 2, chloroplastic (544 aa).

A chloroplast-targeting transit peptide spans 1 to 84 (MASLQLYGVK…SSGTGKELTC (84 aa)). Lys-87, Gly-90, and Ser-119 together coordinate ATP. Glu-203 lines the substrate pocket. ACT domains are found at residues 401 to 479 (IAST…RRSI) and 481 to 544 (SLIG…ETDP).

This sequence belongs to the aspartokinase family. In terms of tissue distribution, expressed in stems, leaves, floral organs and young seedlings.

The protein resides in the plastid. The protein localises to the chloroplast. The enzyme catalyses L-aspartate + ATP = 4-phospho-L-aspartate + ADP. It functions in the pathway amino-acid biosynthesis; L-lysine biosynthesis via DAP pathway; (S)-tetrahydrodipicolinate from L-aspartate: step 1/4. Its pathway is amino-acid biosynthesis; L-methionine biosynthesis via de novo pathway; L-homoserine from L-aspartate: step 1/3. It participates in amino-acid biosynthesis; L-threonine biosynthesis; L-threonine from L-aspartate: step 1/5. Allosterically inhibited by lysine, but not by S-adenosyl-L-methionine (SAM). K(0.5) for lysine in the presence of physiological concentrations of substrates is 12.5 uM. No inhibition by threonine or leucine and no activation or inhibition by alanine, cysteine, isoleucine, serine, valine, methionine, glutamine, asparagine, glutamic acid or arginine. Its function is as follows. Involved in the first step of essential amino acids lysine, threonine, methionine and isoleucine synthesis via the aspartate-family pathway. The protein is Aspartokinase 2, chloroplastic (AK2) of Arabidopsis thaliana (Mouse-ear cress).